A 156-amino-acid chain; its full sequence is Small ribosomal subunit protein uS7c (156 aa).

This sequence belongs to the universal ribosomal protein uS7 family. Part of the 30S ribosomal subunit.

The protein resides in the plastid. It localises to the chloroplast. One of the primary rRNA binding proteins, it binds directly to 16S rRNA where it nucleates assembly of the head domain of the 30S subunit. This Bowenia serrulata (Byfield fern) protein is Small ribosomal subunit protein uS7c (rps7).